We begin with the raw amino-acid sequence, 260 residues long: Ubiquinone/menaquinone biosynthesis C-methyltransferase UbiE (260 aa).

S-adenosyl-L-methionine-binding positions include Thr-83, Asp-104, 132–133 (NA), and Ser-149.

It belongs to the class I-like SAM-binding methyltransferase superfamily. MenG/UbiE family.

The enzyme catalyses a 2-demethylmenaquinol + S-adenosyl-L-methionine = a menaquinol + S-adenosyl-L-homocysteine + H(+). It carries out the reaction a 2-methoxy-6-(all-trans-polyprenyl)benzene-1,4-diol + S-adenosyl-L-methionine = a 5-methoxy-2-methyl-3-(all-trans-polyprenyl)benzene-1,4-diol + S-adenosyl-L-homocysteine + H(+). It participates in quinol/quinone metabolism; menaquinone biosynthesis; menaquinol from 1,4-dihydroxy-2-naphthoate: step 2/2. The protein operates within cofactor biosynthesis; ubiquinone biosynthesis. Its function is as follows. Methyltransferase required for the conversion of demethylmenaquinol (DMKH2) to menaquinol (MKH2) and the conversion of 2-polyprenyl-6-methoxy-1,4-benzoquinol (DDMQH2) to 2-polyprenyl-3-methyl-6-methoxy-1,4-benzoquinol (DMQH2). This Vibrio cholerae serotype O1 (strain ATCC 39315 / El Tor Inaba N16961) protein is Ubiquinone/menaquinone biosynthesis C-methyltransferase UbiE.